A 481-amino-acid polypeptide reads, in one-letter code: 3-isopropylmalate dehydratase large subunit (481 aa).

Positions 357, 417, and 420 each coordinate [4Fe-4S] cluster.

The protein belongs to the aconitase/IPM isomerase family. LeuC type 1 subfamily. In terms of assembly, heterodimer of LeuC and LeuD. [4Fe-4S] cluster serves as cofactor.

It catalyses the reaction (2R,3S)-3-isopropylmalate = (2S)-2-isopropylmalate. Its pathway is amino-acid biosynthesis; L-leucine biosynthesis; L-leucine from 3-methyl-2-oxobutanoate: step 2/4. Its function is as follows. Catalyzes the isomerization between 2-isopropylmalate and 3-isopropylmalate, via the formation of 2-isopropylmaleate. The protein is 3-isopropylmalate dehydratase large subunit of Mycolicibacterium gilvum (strain PYR-GCK) (Mycobacterium gilvum (strain PYR-GCK)).